Reading from the N-terminus, the 520-residue chain is UBX domain-containing protein 11 (520 aa).

Positions 1–26 (MSSPLASLSKTRKVPLPSEPMNPGRR) are disordered. The stretch at 76 to 149 (MAFMTRKLWD…VREMERFLSD (74 aa)) forms a coiled coil. The region spanning 230–294 (LEPIPLKLYR…VSDLRNQVYL (65 aa)) is the SEP domain. The region spanning 392-469 (PAPPLSMLRI…GLVPKAALLL (78 aa)) is the UBX domain. The interval 476 to 520 (KSSLKFSPGPCPGPGPGPSPGPGPGPSPGPGPGPSPCPGPSPSPQ) is disordered. Over residues 484 to 520 (GPCPGPGPGPSPGPGPGPSPGPGPGPSPCPGPSPSPQ) the composition is skewed to pro residues. Repeat copies occupy residues 487 to 494 (PGPGPGPS), 495 to 502 (PGPGPGPS), and 503 to 510 (PGPGPGPS). The interval 487-510 (PGPGPGPSPGPGPGPSPGPGPGPS) is 3 X 8 AA tandem repeats of P-G-P-G-P-G-P-S.

In terms of assembly, interacts with GNA12, GNA13, RND1, RND2 and RND3.

It is found in the cytoplasm. It localises to the cytoskeleton. In terms of biological role, may be involved in the reorganization of actin cytoskeleton mediated by RND1, RND2 and RND3. Promotes RHOA activation mediated by GNA12 and GNA13. The protein is UBX domain-containing protein 11 (UBXN11) of Homo sapiens (Human).